The chain runs to 271 residues: Type III pantothenate kinase (271 aa).

6–13 (DVRNTHTV) provides a ligand contact to ATP. 109 to 112 (GADR) provides a ligand contact to substrate. Aspartate 111 (proton acceptor) is an active-site residue. K(+) is bound at residue aspartate 131. ATP is bound at residue serine 134. Threonine 186 contacts substrate.

Belongs to the type III pantothenate kinase family. As to quaternary structure, homodimer. NH4(+) serves as cofactor. K(+) is required as a cofactor.

The protein resides in the cytoplasm. The enzyme catalyses (R)-pantothenate + ATP = (R)-4'-phosphopantothenate + ADP + H(+). The protein operates within cofactor biosynthesis; coenzyme A biosynthesis; CoA from (R)-pantothenate: step 1/5. Its function is as follows. Catalyzes the phosphorylation of pantothenate (Pan), the first step in CoA biosynthesis. The protein is Type III pantothenate kinase of Mycobacterium avium (strain 104).